A 230-amino-acid polypeptide reads, in one-letter code: Ribosomal RNA small subunit methyltransferase G (230 aa).

Residues Gly-91, Leu-96, 142–143 (VE), and Arg-161 contribute to the S-adenosyl-L-methionine site.

Belongs to the methyltransferase superfamily. RNA methyltransferase RsmG family.

It localises to the cytoplasm. The catalysed reaction is guanosine(527) in 16S rRNA + S-adenosyl-L-methionine = N(7)-methylguanosine(527) in 16S rRNA + S-adenosyl-L-homocysteine. Its function is as follows. Specifically methylates the N7 position of guanine in position 527 of 16S rRNA. In Burkholderia pseudomallei (strain K96243), this protein is Ribosomal RNA small subunit methyltransferase G.